Here is a 402-residue protein sequence, read N- to C-terminus: Major outer membrane porin (402 aa).

Positions 1–22 are cleaved as a signal peptide; it reads MKKLLKSALLFAATGSALSLQA.

The protein belongs to the chlamydial porin (CP) (TC 1.B.2) family. In terms of assembly, part of a disulfide cross-linked outer membrane complex (COMC) composed of the major outer membrane porin (MOMP), the small cysteine-rich protein (OmcA) and the large cysteine-rich periplasmic protein (OmcB).

Its subcellular location is the cell outer membrane. In terms of biological role, in elementary bodies (EBs, the infectious stage, which is able to survive outside the host cell) provides the structural integrity of the outer envelope through disulfide cross-links with the small cysteine-rich protein and the large cysteine-rich periplasmic protein. It has been described in publications as the Sarkosyl-insoluble COMC (Chlamydia outer membrane complex), and serves as the functional equivalent of peptidoglycan. It is present but some of the disulfide bonds are reduced in reticulate bodies (RBs). Its function is as follows. Permits diffusion of specific solutes through the outer membrane. This Chlamydophila psittaci (strain ATCC VR-125 / 6BC) (Chlamydia psittaci) protein is Major outer membrane porin (ompA).